Consider the following 493-residue polypeptide: Cobyric acid synthase (493 aa).

Residues 252 to 440 enclose the GATase cobBQ-type domain; the sequence is PVKIVVLRLR…IHGIFESDSL (189 aa). Cys333 serves as the catalytic Nucleophile. Residue His432 is part of the active site.

This sequence belongs to the CobB/CobQ family. CobQ subfamily.

The protein operates within cofactor biosynthesis; adenosylcobalamin biosynthesis. In terms of biological role, catalyzes amidations at positions B, D, E, and G on adenosylcobyrinic A,C-diamide. NH(2) groups are provided by glutamine, and one molecule of ATP is hydrogenolyzed for each amidation. In Thermodesulfovibrio yellowstonii (strain ATCC 51303 / DSM 11347 / YP87), this protein is Cobyric acid synthase.